The chain runs to 198 residues: MRIKQSEFIISAVKPHQYPIDHRNEVAFVGRSNVGKSSLINSLTNRKKLAKVSGTPGKTRLINFFLINNDFYLVDLPGYGYAKVSKSEKDTWGKTIETYLSHREELKRIVCLVDSRHKPTGDDIMMYEWAKHFGYDVVVVATKSDKLKNAEFKKSEKLIRETLNLTKDDKLYFYSSLNKKGTEELIDKLFLEFATDID.

The EngB-type G domain maps to 22 to 195 (HRNEVAFVGR…IDKLFLEFAT (174 aa)). GTP is bound by residues 30-37 (GRSNVGKS), 57-61 (GKTRL), 75-78 (DLPG), 142-145 (TKSD), and 174-176 (YSS). Positions 37 and 59 each coordinate Mg(2+).

It belongs to the TRAFAC class TrmE-Era-EngA-EngB-Septin-like GTPase superfamily. EngB GTPase family. The cofactor is Mg(2+).

Its function is as follows. Necessary for normal cell division and for the maintenance of normal septation. The sequence is that of Probable GTP-binding protein EngB from Clostridium botulinum (strain Eklund 17B / Type B).